Consider the following 151-residue polypeptide: Deazaflavin-dependent nitroreductase (151 aa).

Coenzyme F420-(gamma-Glu)n-binding positions include 54-56 (RKT), 60-65 (RVNPLY), 76-79 (AASK), 87-91 (MWYLN), and Tyr-133.

It belongs to the F420H(2)-dependent quinone reductase family.

The protein localises to the cell membrane. The catalysed reaction is oxidized coenzyme F420-(gamma-L-Glu)(n) + a quinol + H(+) = reduced coenzyme F420-(gamma-L-Glu)(n) + a quinone. Its function is as follows. Involved in a F420-dependent anti-oxidant mechanism that protects M.tuberculosis against oxidative stress and bactericidal agents. Catalyzes the F420H(2)-dependent two-electron reduction of quinones to dihydroquinones, thereby preventing the formation of cytotoxic semiquinones obtained by the one-electron reduction pathway. In vitro, catalyzes the reduction of both benzoquinone and naphthoquinone analogs; since menaquinone is the sole quinone electron carrier in the respiratory chain in M.tuberculosis, the physiological electron acceptor for Fqr-mediated F420H(2) oxidation is therefore likely to be the endogenous menaquinone found in the membrane fraction of M.tuberculosis. Is able to use F420 species with two and five glutamate residues in its polyglutamate tail. Cannot use NADH or NADPH instead of F420H(2) as the electron donor. Functionally, is involved in the bioreductive activation of bicyclic 4-nitroimidazole prodrugs such as PA-824 and delamanid developed for anti-tuberculosis therapy against both replicating and persistent bacteria. It converts PA-824 into three primary metabolites resulting from reduction of the imidazole ring at C-3; the major one is the corresponding des-nitroimidazole that generates lethal reactive nitrogen species, including nitric oxide (NO), which appears to be responsible for the anaerobic killing activity. Ddn uses the reduced F420 produced by FGD1 to activate PA-824. Delamanid (OPC-67683) is also reduced by Ddn to its des-nitro form. The protein is Deazaflavin-dependent nitroreductase (ddn) of Mycobacterium tuberculosis (strain CDC 1551 / Oshkosh).